The sequence spans 129 residues: MQDLISLEIVTPLGMIYQGEVKSVTLPGSEGEFGVLRGHASLVASLKSGVIDIEKADLNHELIAIDAGHAKVDEDKICVLAKGAVWVCGSDESEIEKNLAQAKDLIKSMSSDNAALAVTFSKLDNARMH.

It belongs to the ATPase epsilon chain family. In terms of assembly, F-type ATPases have 2 components, CF(1) - the catalytic core - and CF(0) - the membrane proton channel. CF(1) has five subunits: alpha(3), beta(3), gamma(1), delta(1), epsilon(1). CF(0) has three main subunits: a, b and c.

The protein resides in the cell inner membrane. In terms of biological role, produces ATP from ADP in the presence of a proton gradient across the membrane. This is ATP synthase epsilon chain from Campylobacter jejuni subsp. doylei (strain ATCC BAA-1458 / RM4099 / 269.97).